The sequence spans 83 residues: NAD(P)H-quinone oxidoreductase subunit L (83 aa).

The next 2 membrane-spanning stretches (helical) occupy residues 18–38 (IGGYVALGGLYLVVMPLLLFF) and 53–73 (FSVYGLVFFFFPGMIVFAPFL).

This sequence belongs to the complex I NdhL subunit family. In terms of assembly, NDH-1 can be composed of about 15 different subunits; different subcomplexes with different compositions have been identified which probably have different functions.

The protein localises to the cellular thylakoid membrane. The enzyme catalyses a plastoquinone + NADH + (n+1) H(+)(in) = a plastoquinol + NAD(+) + n H(+)(out). The catalysed reaction is a plastoquinone + NADPH + (n+1) H(+)(in) = a plastoquinol + NADP(+) + n H(+)(out). NDH-1 shuttles electrons from an unknown electron donor, via FMN and iron-sulfur (Fe-S) centers, to quinones in the respiratory and/or the photosynthetic chain. The immediate electron acceptor for the enzyme in this species is believed to be plastoquinone. Couples the redox reaction to proton translocation, and thus conserves the redox energy in a proton gradient. Cyanobacterial NDH-1 also plays a role in inorganic carbon-concentration. The protein is NAD(P)H-quinone oxidoreductase subunit L of Synechococcus sp. (strain CC9311).